Here is a 119-residue protein sequence, read N- to C-terminus: Large ribosomal subunit protein bL20 (119 aa).

Belongs to the bacterial ribosomal protein bL20 family.

Its function is as follows. Binds directly to 23S ribosomal RNA and is necessary for the in vitro assembly process of the 50S ribosomal subunit. It is not involved in the protein synthesizing functions of that subunit. This chain is Large ribosomal subunit protein bL20, found in Halalkalibacterium halodurans (strain ATCC BAA-125 / DSM 18197 / FERM 7344 / JCM 9153 / C-125) (Bacillus halodurans).